We begin with the raw amino-acid sequence, 622 residues long: Threonine--tRNA ligase (622 aa).

An editing domain region spans residues 1 to 141 (MKTLLIHSDY…SRKITTERKE (141 aa)). The catalytic stretch occupies residues 199–498 (PHVKYIKEKE…TLENRPPALP (300 aa)). Residues cysteine 291, histidine 343, and histidine 467 each coordinate Zn(2+).

Belongs to the class-II aminoacyl-tRNA synthetase family. In terms of assembly, homodimer. Requires Zn(2+) as cofactor.

The protein localises to the cytoplasm. It carries out the reaction tRNA(Thr) + L-threonine + ATP = L-threonyl-tRNA(Thr) + AMP + diphosphate + H(+). Catalyzes the attachment of threonine to tRNA(Thr) in a two-step reaction: L-threonine is first activated by ATP to form Thr-AMP and then transferred to the acceptor end of tRNA(Thr). Also edits incorrectly charged L-seryl-tRNA(Thr). This is Threonine--tRNA ligase from Methanococcus maripaludis (strain C6 / ATCC BAA-1332).